Consider the following 281-residue polypeptide: N-acetyltransferase ECO1 (281 aa).

Residues 33 to 57 (VKCDKCEMSYSSTSIEDRAIHEKYH) form a CCHH-type zinc finger. A disordered region spans residues 86 to 105 (LSRSTGTITPLNSSPLKKSS). The span at 95-105 (PLNSSPLKKSS) shows a compositional bias: low complexity. Residue K223 is modified to N6-acetyllysine; by autocatalysis.

Belongs to the acetyltransferase family. ECO subfamily. Binds specifically to CHL12, RFC1, RFC2, RFC3, RFC4, RFC5 and RAD24 when members of an RFC complex. Interacts with CHL1 and MPS3. Autoacetylates in vitro.

It is found in the nucleus. In terms of biological role, required for establishment of sister chromatid cohesion during S phase but not for its further maintenance during G2 or M phases or for loading the cohesin complex onto DNA. Interacts with the three known alternate replication factor C (RFC) complexes, suggesting that these complexes have essential but redundant activity in cohesion establishment. Acts by acetylating the cohesin complex component SMC3. In vitro, possesses acetyltransferase activity where it can acetylate itself and components of the cohesin complex (MCD1, IRR1 and PDS5), but is unable to acetylate histones. In Saccharomyces cerevisiae (strain ATCC 204508 / S288c) (Baker's yeast), this protein is N-acetyltransferase ECO1 (ECO1).